We begin with the raw amino-acid sequence, 979 residues long: MHC class II regulatory factor RFX1 (979 aa).

Disordered stretches follow at residues 1–136 (MATQ…QVVQ), 181–227 (QSAA…PTGT), and 370–405 (TSTGAGASNSSGGGGSGGGGGGGGGGGGGGSGSTGG). Pro residues predominate over residues 12–44 (APPPSQPPQAPPQAQPQPPPPPPPAAPQPPQPP). Positions 45–73 (TAAATPQPQYVTELQSPQPQAQPPGGQKQ) are enriched in low complexity. Ser60 carries the post-translational modification Phosphoserine. Pro residues predominate over residues 81 to 96 (VPAPSQPTGAPTPSPA). Over residues 114–126 (ETVSEASPGSTAS) the composition is skewed to polar residues. A compositionally biased stretch (low complexity) spans 127–136 (QTGVPTQVVQ). 2 stretches are compositionally biased toward polar residues: residues 190–203 (GQVSLTVHGTQQVH) and 209–220 (SPVQANSSSSKT). A compositionally biased stretch (low complexity) spans 370–379 (TSTGAGASNS). Gly residues predominate over residues 380–405 (SGGGGSGGGGGGGGGGGGGGSGSTGG). A DNA-binding region (RFX-type winged-helix) is located at residues 438 to 513 (TVQWLLDNYE…YHYYGLRIKA (76 aa)). Positions 744–979 (FAQTLRRYTS…GLFVQALPSS (236 aa)) are necessary for dimerization. Positions 915-960 (SLNPLDPDKDEEEEEEEESEDELPQDISLAAGGESPALGPETLEPP) are disordered. Positions 922-938 (DKDEEEEEEEESEDELP) are enriched in acidic residues. Residues Ser978 and Ser979 each carry the phosphoserine modification.

This sequence belongs to the RFX family. Homodimer; binds DNA as a homodimer. Heterodimer; heterodimerizes with RFX2 and RFX3.

It is found in the nucleus. Its function is as follows. Regulatory factor essential for MHC class II genes expression. Binds to the X boxes of MHC class II genes. Also binds to an inverted repeat (ENH1) required for hepatitis B virus genes expression and to the most upstream element (alpha) of the RPL30 promoter. The polypeptide is MHC class II regulatory factor RFX1 (RFX1) (Homo sapiens (Human)).